The primary structure comprises 164 residues: MVNPTVFFDIAVDGEPLGRVSFELFADKVPKTAENFRALSTGEKGFGYKGSCFHRIIPGFMCQGGDFTRHNGTGGKSIYGEKFDDENFILKHTGPGILSMANAGPNTNGSQFFICTVKTEWLDGKHVVFGKVKEGMNIVEAMERFGSRNGKTSKKITIADCGQL.

Met1 is subject to N-acetylmethionine. Val2 carries the post-translational modification N-acetylvaline; in Peptidyl-prolyl cis-trans isomerase A, N-terminally processed. The PPIase cyclophilin-type domain maps to 7–163; that stretch reads FFDIAVDGEP…KKITIADCGQ (157 aa). Residue Lys28 is modified to N6-acetyllysine; alternate. Lys28 participates in a covalent cross-link: Glycyl lysine isopeptide (Lys-Gly) (interchain with G-Cter in SUMO2); alternate. Lys28 is covalently cross-linked (Glycyl lysine isopeptide (Lys-Gly) (interchain with G-Cter in ubiquitin); alternate). N6-acetyllysine is present on residues Lys44 and Lys76. Ser77 is subject to Phosphoserine. Lys82 carries the N6-acetyllysine; alternate modification. Residue Lys82 forms a Glycyl lysine isopeptide (Lys-Gly) (interchain with G-Cter in SUMO2); alternate linkage. Phosphothreonine is present on Thr93. An N-linked (GlcNAc...) asparagine glycan is attached at Asn108. N6-acetyllysine is present on residues Lys125, Lys131, and Lys133.

Belongs to the cyclophilin-type PPIase family. PPIase A subfamily. In terms of assembly, interacts with protein phosphatase PPP3CA/calcineurin A. Interacts with isoform 2 of BSG/CD147. Interacts with FOXO1; the interaction promotes FOXO1 dephosphorylation, nuclear accumulation and transcriptional activity. Interacts with integrin ITGA2B:ITGB3; the interaction is ROS and peptidyl-prolyl cis-trans isomerase (PPIase) activity-dependent and is increased in the presence of thrombin. Interacts with MAP3K5. Interacts with TARDBP; the interaction is dependent on the RNA-binding activity of TARDBP and the PPIase activity of PPIA/CYPA and the acetylation of PPIA/CYPA at Lys-125 favors the interaction. Interacts with HNRNPA1, HNRNPA2B1, HNRNPC, RBMX, HNRNPK and HNRNPM. In terms of processing, acetylation at Lys-125 markedly inhibits catalysis of cis to trans isomerization. PPIA acetylation also antagonizes the immunosuppressive effects of cyclosporine by inhibiting the sequential steps of cyclosporine binding and calcineurin inhibition. Acetylation at Lys-125 favors the interaction with TARDBP.

The protein localises to the cytoplasm. The protein resides in the secreted. It is found in the nucleus. It catalyses the reaction [protein]-peptidylproline (omega=180) = [protein]-peptidylproline (omega=0). Its activity is regulated as follows. Binds cyclosporin A (CsA). CsA mediates some of its effects via an inhibitory action on PPIase. Functionally, catalyzes the cis-trans isomerization of proline imidic peptide bonds in oligopeptides. Exerts a strong chemotactic effect on leukocytes partly through activation of one of its membrane receptors BSG/CD147, initiating a signaling cascade that culminates in MAPK/ERK activation. Activates endothelial cells (ECs) in a proinflammatory manner by stimulating activation of NF-kappa-B and ERK, JNK and p38 MAP-kinases and by inducing expression of adhesion molecules including SELE and VCAM1. Induces apoptosis in ECs by promoting the FOXO1-dependent expression of CCL2 and BCL2L11 which are involved in EC chemotaxis and apoptosis. In response to oxidative stress, initiates proapoptotic and antiapoptotic signaling in ECs via activation of NF-kappa-B and AKT1 and up-regulation of antiapoptotic protein BCL2. Negatively regulates MAP3K5/ASK1 kinase activity, autophosphorylation and oxidative stress-induced apoptosis mediated by MAP3K5/ASK1. Necessary for the assembly of TARDBP in heterogeneous nuclear ribonucleoprotein (hnRNP) complexes and regulates TARDBP binding to RNA UG repeats and TARDBP-dependent expression of HDAC6, ATG7 and VCP which are involved in clearance of protein aggregates. Plays an important role in platelet activation and aggregation. Regulates calcium mobilization and integrin ITGA2B:ITGB3 bidirectional signaling via increased ROS production as well as by facilitating the interaction between integrin and the cell cytoskeleton. Binds heparan sulfate glycosaminoglycans. This chain is Peptidyl-prolyl cis-trans isomerase A (PPIA), found in Saguinus oedipus (Cotton-top tamarin).